We begin with the raw amino-acid sequence, 221 residues long: Putative gene 53 protein (221 aa).

The protein is Putative gene 53 protein (53) of Bacillus phage SP01 (Bacteriophage SP01).